The following is a 236-amino-acid chain: uncharacterized protein (236 aa).

Positions M1–A22 are cleaved as a signal peptide.

This is an uncharacterized protein from Pasteurella multocida (strain Pm70).